Here is a 228-residue protein sequence, read N- to C-terminus: Gliolectin (228 aa).

Topologically, residues 1-120 (MLCPPMALGP…NPKAVSQAPR (120 aa)) are cytoplasmic. A helical; Signal-anchor for type II membrane protein transmembrane segment spans residues 121–137 (GMALTPAQISASAKLIL). The Extracellular segment spans residues 138 to 228 (QKCPESDRKK…GTSELADQKQ (91 aa)). The disordered stretch occupies residues 141 to 228 (PESDRKKSNG…GTSELADQKQ (88 aa)). Residues Asn149, Asn156, Asn198, Asn199, Asn205, and Asn218 are each glycosylated (N-linked (GlcNAc...) asparagine). The segment covering 195-213 (NNNNNSSSSNNNSNMNINN) has biased composition (low complexity). Polar residues predominate over residues 218-228 (NGTSELADQKQ).

Expressed by a subset of glial cells found at the midline of the embryo stage 12 nervous system. Expression is highest during the formation of the embryonic axonal commissures, a process requiring midline glial cell function (at protein level).

The protein localises to the membrane. Its function is as follows. Has a role in intercellular carbohydrate-mediated cell adhesion. This chain is Gliolectin, found in Drosophila melanogaster (Fruit fly).